We begin with the raw amino-acid sequence, 236 residues long: MNWQFATAFGALMYFGCVIPLSAAEYEALRQKMVREVIAASGNSPPGASVVAAMEKVERHRFVPAWLSIFAYRNHPLPIGHGQTISQPLIVARMTELLKLKKDDKVLEIGTGSGYQAAVLAEIAKTVYTIEIIEPLGNEAAGRLQSLGYDNVKTRIGDGYYGWPEAAPFDAILVTAAASHVPPPLLKQLKPGGRMVVPLGAPFMTQYLMLVEKQPDGSVTTHQIVPVRFVPLRGGH.

Residue Ser86 is part of the active site.

The protein belongs to the methyltransferase superfamily. L-isoaspartyl/D-aspartyl protein methyltransferase family.

It localises to the cytoplasm. It catalyses the reaction [protein]-L-isoaspartate + S-adenosyl-L-methionine = [protein]-L-isoaspartate alpha-methyl ester + S-adenosyl-L-homocysteine. Catalyzes the methyl esterification of L-isoaspartyl residues in peptides and proteins that result from spontaneous decomposition of normal L-aspartyl and L-asparaginyl residues. It plays a role in the repair and/or degradation of damaged proteins. The chain is Protein-L-isoaspartate O-methyltransferase 1 from Nitrosospira multiformis (strain ATCC 25196 / NCIMB 11849 / C 71).